Consider the following 679-residue polypeptide: Methionine--tRNA ligase (679 aa).

Positions 15–25 (PYANGSIHLGH) match the 'HIGH' region motif. Zn(2+)-binding residues include Cys146, Cys149, Cys159, and Cys162. The 'KMSKS' region signature appears at 332–336 (KMSKS). Residue Lys335 coordinates ATP. Residues 577-679 (DFAKVDMRVA…AGALPGMPVK (103 aa)) form the tRNA-binding domain.

This sequence belongs to the class-I aminoacyl-tRNA synthetase family. MetG type 1 subfamily. Homodimer. Zn(2+) is required as a cofactor.

Its subcellular location is the cytoplasm. It carries out the reaction tRNA(Met) + L-methionine + ATP = L-methionyl-tRNA(Met) + AMP + diphosphate. In terms of biological role, is required not only for elongation of protein synthesis but also for the initiation of all mRNA translation through initiator tRNA(fMet) aminoacylation. The protein is Methionine--tRNA ligase of Sodalis glossinidius (strain morsitans).